The sequence spans 524 residues: Cytochrome P450 monooxygenase lnaC (524 aa).

The chain crosses the membrane as a helical span at residues 16–36; the sequence is ALAVSCIAVSLFLLSPWIAYA. N-linked (GlcNAc...) asparagine glycosylation occurs at Asn-150. Cys-471 is a binding site for heme.

The protein belongs to the cytochrome P450 family. Heme is required as a cofactor.

It is found in the membrane. It participates in secondary metabolite biosynthesis. Functionally, cytochrome P450 monooxygenase; part of the lna gene cluster that mediates the biosynthesis of diastereomeric piperazines. Lna and lnb clusters encode sets of enzymes that produce overlapping sets of previously undescribed metabolites such as piperazinomycin-like metabolites or morpholine. The lna and lnb biosynthetic pathways appear to be part of a signaling network that controls the formation of sclerotia, a resilient overwintering structure. One primary function of the non-canonical nonribosomal peptide synthetases lnaA and lnbA consists in the reduction of L-tyrosine. The presence in the clusters of tailoring enzymes such as the oxidoreductases lnaB, lnbB, lnaE or lnbE, as well as of the cytochrome P450 monooxygenases lnaC, lnaD, or lnbC, might explain formation of various diastereomeric piperazines. The chain is Cytochrome P450 monooxygenase lnaC from Aspergillus flavus (strain ATCC 200026 / FGSC A1120 / IAM 13836 / NRRL 3357 / JCM 12722 / SRRC 167).